Reading from the N-terminus, the 255-residue chain is tRNA (guanine-N(1)-)-methyltransferase (255 aa).

S-adenosyl-L-methionine contacts are provided by residues G117 and L137–L142.

The protein belongs to the RNA methyltransferase TrmD family. As to quaternary structure, homodimer.

The protein resides in the cytoplasm. It carries out the reaction guanosine(37) in tRNA + S-adenosyl-L-methionine = N(1)-methylguanosine(37) in tRNA + S-adenosyl-L-homocysteine + H(+). Its function is as follows. Specifically methylates guanosine-37 in various tRNAs. This chain is tRNA (guanine-N(1)-)-methyltransferase, found in Paraburkholderia xenovorans (strain LB400).